A 63-amino-acid polypeptide reads, in one-letter code: Metallothionein-1 (63 aa).

2 repeats span residues 23–30 and 56–63; these read CGDKCECK.

This sequence belongs to the metallothionein superfamily. Type 9 family.

The metallothioneins are involved in the cellular sequestration of toxic metal ions. This Candida glabrata (strain ATCC 2001 / BCRC 20586 / JCM 3761 / NBRC 0622 / NRRL Y-65 / CBS 138) (Yeast) protein is Metallothionein-1 (MT-I).